Reading from the N-terminus, the 147-residue chain is Putative pre-16S rRNA nuclease (147 aa).

This sequence belongs to the YqgF nuclease family.

It is found in the cytoplasm. In terms of biological role, could be a nuclease involved in processing of the 5'-end of pre-16S rRNA. This Acinetobacter baylyi (strain ATCC 33305 / BD413 / ADP1) protein is Putative pre-16S rRNA nuclease.